The primary structure comprises 162 residues: Transcription elongation factor GreB (162 aa).

Positions 52–76 form a coiled coil; sequence GKRRLREIDRRIRFLSKRLEALQII.

The protein belongs to the GreA/GreB family. GreB subfamily.

Necessary for efficient RNA polymerase transcription elongation past template-encoded arresting sites. The arresting sites in DNA have the property of trapping a certain fraction of elongating RNA polymerases that pass through, resulting in locked ternary complexes. Cleavage of the nascent transcript by cleavage factors such as GreA or GreB allows the resumption of elongation from the new 3'terminus. GreB releases sequences of up to 9 nucleotides in length. The polypeptide is Transcription elongation factor GreB (Haemophilus ducreyi (strain 35000HP / ATCC 700724)).